The sequence spans 193 residues: Riboflavin kinase (193 aa).

Residues 1 to 59 form an H-T-H motif-like region; it reads MGISQQAASQHLRELEDEGLITRNAEGKGISVMVTDKGRHELLRVYNILHDSLHSRPDH. Positions 60 to 193 are riboflavin kinase; sequence VEITGTLVSG…TIRIPLEQED (134 aa). 69-74 serves as a coordination point for CDP; sequence GMNEGA. Residues Thr98 and Asn100 each contribute to the Mg(2+) site. FMN is bound by residues Thr156 and Glu164. CDP is bound at residue 169 to 172; it reads LDIR.

Belongs to the archaeal riboflavin kinase family. Requires Mg(2+) as cofactor.

The enzyme catalyses riboflavin + CTP = CDP + FMN + H(+). It participates in cofactor biosynthesis; FMN biosynthesis; FMN from riboflavin (CTP route): step 1/1. In terms of biological role, catalyzes the CTP-dependent phosphorylation of riboflavin (vitamin B2) to form flavin mononucleotide (FMN). The sequence is that of Riboflavin kinase (ribK) from Cenarchaeum symbiosum (strain A).